The sequence spans 86 residues: Mu-theraphotoxin-Hhn1b 1 (86 aa).

Positions Met-1–Ala-21 are cleaved as a signal peptide. Positions Ser-22–Arg-49 are excised as a propeptide. 3 cysteine pairs are disulfide-bonded: Cys-51-Cys-66, Cys-58-Cys-73, and Cys-65-Cys-80. Position 84 is an isoleucine amide (Ile-84).

This sequence belongs to the neurotoxin 10 (Hwtx-1) family. 22 (Htx-4) subfamily. Monomer. In terms of tissue distribution, expressed by the venom gland.

The protein resides in the secreted. Its function is as follows. Neurotoxin that selectively inhibits neuronal tetrodotoxin-sensitive voltage-gated sodium channels (Nav) (IC(50)=44.6 nM). It is active on Nav1.2/SCN2A (IC(50)=22.4 nM), Nav1.6/SCN8A (IC(50)=50.1 nM) and Nav1.7/SCN9A (IC(50)=48.9 nM). It shows low affinity for lipid bilayers. The protein is Mu-theraphotoxin-Hhn1b 1 of Cyriopagopus hainanus (Chinese bird spider).